The following is a 296-amino-acid chain: Fructose-bisphosphate aldolase class 1 (296 aa).

The active-site Proton acceptor is Glu175. Lys212 serves as the catalytic Schiff-base intermediate with dihydroxyacetone-P.

It belongs to the class I fructose-bisphosphate aldolase family.

The catalysed reaction is beta-D-fructose 1,6-bisphosphate = D-glyceraldehyde 3-phosphate + dihydroxyacetone phosphate. The protein operates within carbohydrate degradation; glycolysis; D-glyceraldehyde 3-phosphate and glycerone phosphate from D-glucose: step 4/4. This Staphylococcus haemolyticus (strain JCSC1435) protein is Fructose-bisphosphate aldolase class 1.